Consider the following 159-residue polypeptide: Phosphopantetheine adenylyltransferase (159 aa).

T10 is a substrate binding site. Residues 10–11 and H18 each bind ATP; that span reads TF. Residues K42, M74, and R88 each coordinate substrate. Residues 89–91, E99, and 124–130 contribute to the ATP site; these read GLR and WSFISSS.

The protein belongs to the bacterial CoaD family. Homohexamer. Mg(2+) is required as a cofactor.

It localises to the cytoplasm. It carries out the reaction (R)-4'-phosphopantetheine + ATP + H(+) = 3'-dephospho-CoA + diphosphate. The protein operates within cofactor biosynthesis; coenzyme A biosynthesis; CoA from (R)-pantothenate: step 4/5. In terms of biological role, reversibly transfers an adenylyl group from ATP to 4'-phosphopantetheine, yielding dephospho-CoA (dPCoA) and pyrophosphate. The sequence is that of Phosphopantetheine adenylyltransferase from Enterobacter sp. (strain 638).